A 455-amino-acid chain; its full sequence is RQC trigger complex subunit RQT4 homolog (455 aa).

Disordered stretches follow at residues 64 to 98 and 118 to 148; these read STHSGNSPSIMKNKKNVTPNNNIRQKNTATSSHPS and PASRNKSQSNNISSHEKSSKTTKNVSPGVMT. Composition is skewed to polar residues over residues 65–98 and 119–130; these read THSGNSPSIMKNKKNVTPNNNIRQKNTATSSHPS and ASRNKSQSNNIS. Phosphoserine is present on serine 70. Serine 380 is subject to Phosphoserine.

As to quaternary structure, component of the RQT (ribosome quality control trigger) complex.

It localises to the cytoplasm. It is found in the cytosol. In terms of biological role, probably functions as part of the RQC trigger (RQT) complex that activates the ribosome quality control (RQC) pathway, a pathway that degrades nascent peptide chains during problematic translation. The sequence is that of RQC trigger complex subunit RQT4 homolog from Schizosaccharomyces pombe (strain 972 / ATCC 24843) (Fission yeast).